We begin with the raw amino-acid sequence, 1042 residues long: Isoleucine--tRNA ligase (1042 aa).

The 'HIGH' region motif lies at 48–58; that stretch reads PFATGLPHFGH. A 'KMSKS' region motif is present at residues 594-598; that stretch reads KMSKS. K597 serves as a coordination point for ATP.

Belongs to the class-I aminoacyl-tRNA synthetase family. IleS type 2 subfamily. As to quaternary structure, monomer. Zn(2+) is required as a cofactor.

The protein localises to the cytoplasm. The catalysed reaction is tRNA(Ile) + L-isoleucine + ATP = L-isoleucyl-tRNA(Ile) + AMP + diphosphate. Its function is as follows. Catalyzes the attachment of isoleucine to tRNA(Ile). As IleRS can inadvertently accommodate and process structurally similar amino acids such as valine, to avoid such errors it has two additional distinct tRNA(Ile)-dependent editing activities. One activity is designated as 'pretransfer' editing and involves the hydrolysis of activated Val-AMP. The other activity is designated 'posttransfer' editing and involves deacylation of mischarged Val-tRNA(Ile). This Borrelia garinii subsp. bavariensis (strain ATCC BAA-2496 / DSM 23469 / PBi) (Borreliella bavariensis) protein is Isoleucine--tRNA ligase.